Consider the following 115-residue polypeptide: Probable non-functional immunoglobulin heavy variable 8-51-1 (115 aa).

The signal sequence occupies residues 1-17 (MLVCVLLYSFRLFGIQG). A framework-1 region spans residues 18 to 42 (EAQLTESGGDLVHLEGPLRLSCAAS). An Ig-like domain is found at 19 to 115 (AQLTESGGDL…QNMAAFNCAG (97 aa)). A complementarity-determining-1 region spans residues 43–50 (WFTFSIYE). Positions 51 to 67 (IHWVCQASGKGLEWVAV) are framework-2. An intrachain disulfide couples cysteine 55 to cysteine 113. The complementarity-determining-2 stretch occupies residues 68-75 (IWRGESHQ). Residues 76-113 (YNADYVRGRLTTSRDNTKYMLYMQMISLRTQNMAAFNC) are framework-3. A complementarity-determining-3 region spans residues 114–115 (AG).

In terms of assembly, immunoglobulins are composed of two identical heavy chains and two identical light chains; disulfide-linked.

The protein localises to the secreted. It localises to the cell membrane. In terms of biological role, probable non-functional open reading frame (ORF) of V region of the variable domain of immunoglobulin heavy chains. Non-functional ORF generally cannot participate in the synthesis of a productive immunoglobulin chain due to altered V-(D)-J or switch recombination and/or splicing site (at mRNA level) and/or conserved amino acid change (protein level). Immunoglobulins, also known as antibodies, are membrane-bound or secreted glycoproteins produced by B lymphocytes. In the recognition phase of humoral immunity, the membrane-bound immunoglobulins serve as receptors which, upon binding of a specific antigen, trigger the clonal expansion and differentiation of B lymphocytes into immunoglobulins-secreting plasma cells. Secreted immunoglobulins mediate the effector phase of humoral immunity, which results in the elimination of bound antigens. The antigen binding site is formed by the variable domain of one heavy chain, together with that of its associated light chain. Thus, each immunoglobulin has two antigen binding sites with remarkable affinity for a particular antigen. The variable domains are assembled by a process called V-(D)-J rearrangement and can then be subjected to somatic hypermutations which, after exposure to antigen and selection, allow affinity maturation for a particular antigen. In Homo sapiens (Human), this protein is Probable non-functional immunoglobulin heavy variable 8-51-1.